Reading from the N-terminus, the 329-residue chain is Diaminopimelate epimerase (329 aa).

Substrate contacts are provided by Asn-14 and Asn-73. The active-site Proton donor is the Cys-82. Substrate contacts are provided by residues 83 to 84 (GN), Asn-170, Asn-206, and 224 to 225 (ER). Cys-233 (proton acceptor) is an active-site residue. 234–235 (GT) lines the substrate pocket.

It belongs to the diaminopimelate epimerase family. In terms of assembly, homodimer.

It localises to the cytoplasm. It catalyses the reaction (2S,6S)-2,6-diaminopimelate = meso-2,6-diaminopimelate. The protein operates within amino-acid biosynthesis; L-lysine biosynthesis via DAP pathway; DL-2,6-diaminopimelate from LL-2,6-diaminopimelate: step 1/1. Its function is as follows. Catalyzes the stereoinversion of LL-2,6-diaminopimelate (L,L-DAP) to meso-diaminopimelate (meso-DAP), a precursor of L-lysine and an essential component of the bacterial peptidoglycan. The polypeptide is Diaminopimelate epimerase (Listeria monocytogenes serotype 4a (strain HCC23)).